Reading from the N-terminus, the 309-residue chain is Aspartate carbamoyltransferase catalytic subunit (309 aa).

Carbamoyl phosphate-binding residues include Arg55 and Thr56. Lys85 contributes to the L-aspartate binding site. The carbamoyl phosphate site is built by Arg106, His135, and Gln138. The L-aspartate site is built by Arg168 and Arg230. Leu268 and Pro269 together coordinate carbamoyl phosphate.

This sequence belongs to the aspartate/ornithine carbamoyltransferase superfamily. ATCase family. Heterododecamer (2C3:3R2) of six catalytic PyrB chains organized as two trimers (C3), and six regulatory PyrI chains organized as three dimers (R2).

The catalysed reaction is carbamoyl phosphate + L-aspartate = N-carbamoyl-L-aspartate + phosphate + H(+). Its pathway is pyrimidine metabolism; UMP biosynthesis via de novo pathway; (S)-dihydroorotate from bicarbonate: step 2/3. Its function is as follows. Catalyzes the condensation of carbamoyl phosphate and aspartate to form carbamoyl aspartate and inorganic phosphate, the committed step in the de novo pyrimidine nucleotide biosynthesis pathway. The sequence is that of Aspartate carbamoyltransferase catalytic subunit from Vibrio campbellii (strain ATCC BAA-1116).